The primary structure comprises 221 residues: Orotidine 5'-phosphate decarboxylase (221 aa).

Substrate contacts are provided by residues Asp12, Lys34, 60 to 69 (DFKVADIPNT), Ser117, 170 to 180 (PGVGAQGGKAS), Gly193, and Arg194. The active-site Proton donor is Lys62.

Belongs to the OMP decarboxylase family. Type 1 subfamily. As to quaternary structure, homodimer.

The catalysed reaction is orotidine 5'-phosphate + H(+) = UMP + CO2. The protein operates within pyrimidine metabolism; UMP biosynthesis via de novo pathway; UMP from orotate: step 2/2. Catalyzes the decarboxylation of orotidine 5'-monophosphate (OMP) to uridine 5'-monophosphate (UMP). The sequence is that of Orotidine 5'-phosphate decarboxylase from Methanosarcina barkeri (strain Fusaro / DSM 804).